The primary structure comprises 549 residues: CTP synthase (549 aa).

The amidoligase domain stretch occupies residues 1–267 (MAKFVFITGG…CREVLDVLNL (267 aa)). A CTP-binding site is contributed by S13. Residue S13 coordinates UTP. ATP contacts are provided by residues 14–19 (SIGKGI) and D71. D71 and E141 together coordinate Mg(2+). CTP contacts are provided by residues 148 to 150 (DIE), 188 to 193 (KTKPTQ), and K224. Residues 188-193 (KTKPTQ) and K224 each bind UTP. A Glutamine amidotransferase type-1 domain is found at 292–534 (KIALVGKYVQ…IEAAQQRLPD (243 aa)). L-glutamine is bound at residue G354. The active-site Nucleophile; for glutamine hydrolysis is C381. L-glutamine is bound by residues 382–385 (LGMQ), E405, and R462. Residues H507 and E509 contribute to the active site.

This sequence belongs to the CTP synthase family. As to quaternary structure, homotetramer.

The enzyme catalyses UTP + L-glutamine + ATP + H2O = CTP + L-glutamate + ADP + phosphate + 2 H(+). It catalyses the reaction L-glutamine + H2O = L-glutamate + NH4(+). The catalysed reaction is UTP + NH4(+) + ATP = CTP + ADP + phosphate + 2 H(+). It participates in pyrimidine metabolism; CTP biosynthesis via de novo pathway; CTP from UDP: step 2/2. Its activity is regulated as follows. Allosterically activated by GTP, when glutamine is the substrate; GTP has no effect on the reaction when ammonia is the substrate. The allosteric effector GTP functions by stabilizing the protein conformation that binds the tetrahedral intermediate(s) formed during glutamine hydrolysis. Inhibited by the product CTP, via allosteric rather than competitive inhibition. Its function is as follows. Catalyzes the ATP-dependent amination of UTP to CTP with either L-glutamine or ammonia as the source of nitrogen. Regulates intracellular CTP levels through interactions with the four ribonucleotide triphosphates. This is CTP synthase from Synechococcus sp. (strain CC9605).